Here is a 176-residue protein sequence, read N- to C-terminus: Tubulin polymerization-promoting protein family member 3 (176 aa).

The tract at residues threonine 132–arginine 151 is disordered. The span at serine 134–arginine 151 shows a compositional bias: basic and acidic residues.

It belongs to the TPPP family.

The protein localises to the cytoplasm. It is found in the cytoskeleton. Its function is as follows. Regulator of microtubule dynamic that has microtubule bundling activity. The polypeptide is Tubulin polymerization-promoting protein family member 3 (tppp3) (Xenopus laevis (African clawed frog)).